Here is a 152-residue protein sequence, read N- to C-terminus: Deoxyuridine 5'-triphosphate nucleotidohydrolase (152 aa).

Substrate is bound by residues 71–73 (RSG), N84, 88–90 (LID), and M98.

Belongs to the dUTPase family. Mg(2+) serves as cofactor.

It catalyses the reaction dUTP + H2O = dUMP + diphosphate + H(+). The protein operates within pyrimidine metabolism; dUMP biosynthesis; dUMP from dCTP (dUTP route): step 2/2. Functionally, this enzyme is involved in nucleotide metabolism: it produces dUMP, the immediate precursor of thymidine nucleotides and it decreases the intracellular concentration of dUTP so that uracil cannot be incorporated into DNA. This chain is Deoxyuridine 5'-triphosphate nucleotidohydrolase, found in Serratia proteamaculans (strain 568).